Reading from the N-terminus, the 335-residue chain is Probable cytosolic iron-sulfur protein assembly protein Ciao1 (335 aa).

7 WD repeats span residues 12–51 (GHKGRIWGVAWHPKGNVFASCGEDKAIRIWSLTGSTWSTK), 57–96 (GHKRTIREIRWSPCGQYLASASFDATTAIWSKSSGEFECN), 101–140 (GHENEVKSVSWSRSGGLLATCSRDKSVWIWEVAGDDEFEC), 146–185 (SHTQDVKRVVWHPTKEVLASASYDNTIKMYAEDPVDNDWD), 192–231 (SHTSTIWGIDFDADGERLVSCSDDTTIKIWKAYHPGNSAG), 250–289 (QHSRAIYDVSWCKLTGLIATACGDDGIRIFKETSDSKPDE), and 301–335 (AHDQDVNSVQWNPVVAGQLISCSDDGTIKIWKVTE).

Belongs to the WD repeat CIA1 family.

Its function is as follows. Essential component of the cytosolic iron-sulfur (Fe/S) protein assembly machinery. Required for the maturation of extramitochondrial Fe/S proteins. This chain is Probable cytosolic iron-sulfur protein assembly protein Ciao1, found in Drosophila erecta (Fruit fly).